The sequence spans 228 residues: MVDGRKPHINVGTIGHVDHGKTTLTAALTTVLAKRLSGEGNKSVKYDEIDKAPEEKARGITISTAHVEYETENRHYAHVDCPGHADYIKNMITGAAQMDAAILVVSATDGAMPQTREHILLAKQVGVKDIVVWMNKCDVVDDEEMLSLVEMEIRELLTKYGYPGDDIDVVKGSAVKALEEESADGVWSEKIMELMNPLEKIDLPIREKDNPFVRSIEDVMFNTPGEAQ.

A tr-type G domain is found at 6–212 (KPHINVGTIG…LPIREKDNPF (207 aa)). Positions 15–22 (GHVDHGKT) are G1. The tract at residues 59 to 63 (GITIS) is G2. The G3 stretch occupies residues 80-83 (DCPG). Positions 135 to 138 (NKCD) are G4. The tract at residues 173 to 175 (SAV) is G5.

This sequence belongs to the TRAFAC class translation factor GTPase superfamily. Classic translation factor GTPase family. EF-Tu/EF-1A subfamily.

The chain is Putative elongation factor Tu-like protein from Ehrlichia ruminantium (strain Welgevonden).